The following is a 1183-amino-acid chain: Chromosome partition protein Smc (1183 aa).

32–39 (PNGCGKTN) contributes to the ATP binding site. 2 coiled-coil regions span residues 167–322 (ITRY…ERLN) and 358–497 (AEFE…ALCN). Positions 409–442 (KEHLEGSVNRLDQRKRDLERSMEQAEPERRRTSE) are disordered. Residues 419-442 (LDQRKRDLERSMEQAEPERRRTSE) are compositionally biased toward basic and acidic residues. One can recognise an SMC hinge domain in the interval 523–632 (LGCLSDLISV…VADLDAAEQL (110 aa)). Coiled-coil stretches lie at residues 669 to 941 (GKKA…VMER) and 980 to 1025 (NELA…ALEK).

It belongs to the SMC family. In terms of assembly, homodimer.

The protein resides in the cytoplasm. Its function is as follows. Required for chromosome condensation and partitioning. The protein is Chromosome partition protein Smc of Chlorobaculum tepidum (strain ATCC 49652 / DSM 12025 / NBRC 103806 / TLS) (Chlorobium tepidum).